A 715-amino-acid polypeptide reads, in one-letter code: Fatty acid oxidation complex subunit alpha (715 aa).

The tract at residues 1-194 (MHEQRAKPSA…RLGLVDDAVP (194 aa)) is enoyl-CoA hydratase. Positions 310–715 (HALHRIGILG…QGERFYPQGS (406 aa)) are 3-hydroxyacyl-CoA dehydrogenase.

In the N-terminal section; belongs to the enoyl-CoA hydratase/isomerase family. The protein in the central section; belongs to the 3-hydroxyacyl-CoA dehydrogenase family. Heterotetramer of two alpha chains (FadJ) and two beta chains (FadI).

It is found in the cytoplasm. It catalyses the reaction a (3S)-3-hydroxyacyl-CoA = a (2E)-enoyl-CoA + H2O. The catalysed reaction is a 4-saturated-(3S)-3-hydroxyacyl-CoA = a (3E)-enoyl-CoA + H2O. The enzyme catalyses a (3S)-3-hydroxyacyl-CoA + NAD(+) = a 3-oxoacyl-CoA + NADH + H(+). It carries out the reaction (3S)-3-hydroxybutanoyl-CoA = (3R)-3-hydroxybutanoyl-CoA. Its pathway is lipid metabolism; fatty acid beta-oxidation. In terms of biological role, catalyzes the formation of a hydroxyacyl-CoA by addition of water on enoyl-CoA. Also exhibits 3-hydroxyacyl-CoA epimerase and 3-hydroxyacyl-CoA dehydrogenase activities. The chain is Fatty acid oxidation complex subunit alpha from Serratia proteamaculans (strain 568).